A 2788-amino-acid polypeptide reads, in one-letter code: Multiple epidermal growth factor-like domains protein 8 (2788 aa).

A signal peptide spans 1–27 (MALGGALAAALALAFAVLGPLSHKVLA). Residues 28–2590 (GDCKGQRQVL…FFRQDQAHID (2563 aa)) lie on the Extracellular side of the membrane. 6 disulfides stabilise this stretch: Cys-30–Cys-57, Cys-142–Cys-152, Cys-146–Cys-158, Cys-174–Cys-184, Cys-178–Cys-191, and Cys-193–Cys-202. A CUB 1 domain is found at 30–140 (CKGQRQVLRE…LGFNASFRFS (111 aa)). Asn-50 is a glycosylation site (N-linked (GlcNAc...) asparagine). EGF-like domains are found at residues 138–168 (RFSLCPGGCQNHGQCKSPGVCVCEPGWGGPD) and 170–203 (GLQECSAYCGSHGTCASTLGPCRCEPGFLGRACD). Kelch repeat units lie at residues 241 to 287 (LLAV…AVAW), 290 to 338 (FLVL…AGHA), 346 to 399 (WLYV…FHAP), 402 to 453 (TLLV…FHTA), 459 to 511 (YMVV…APPS), and 525 to 575 (VLLV…SRDP). 3 consecutive PSI domains span residues 561-613 (YCSM…SDCQ), 847-899 (ACSS…ALCP), and 900-947 (LCEE…EECP). N-linked (GlcNAc...) asparagine glycosylation occurs at Asn-1048. Positions 1074–1115 (DVDECRLGLARCHPRATCLNTPLSYECHCQRGYQGDGITHCN) constitute an EGF-like 3; calcium-binding domain. Intrachain disulfides connect Cys-1078/Cys-1091, Cys-1085/Cys-1100, Cys-1102/Cys-1114, Cys-1163/Cys-1171, Cys-1165/Cys-1179, Cys-1182/Cys-1191, Cys-1194/Cys-1208, Cys-1211/Cys-1224, Cys-1213/Cys-1231, Cys-1233/Cys-1242, Cys-1245/Cys-1259, Cys-1263/Cys-1302, Cys-1336/Cys-1367, Cys-1407/Cys-1421, Cys-1415/Cys-1433, and Cys-1435/Cys-1444. Laminin EGF-like domains are found at residues 1163–1210 (CGCN…GCRP) and 1211–1261 (CQCN…SCFR). The region spanning 1263 to 1405 (CGGRALLTNV…WGFNASVGSA (143 aa)) is the CUB 2 domain. An N-linked (GlcNAc...) asparagine glycan is attached at Asn-1271. Phosphothreonine is present on Thr-1353. The EGF-like 4 domain occupies 1403-1445 (GSARCGSGGPGSCPVPQECVPQDGAAGAGLCRCPQGWAGPHCR). 6 Kelch repeats span residues 1522–1570 (TLWM…SFHA), 1580–1626 (AMYL…HTLT), 1632–1678 (SLLL…SAVY), 1684–1734 (SLYV…HASA), 1739–1786 (TMVV…ESVA), and 1795–1840 (RLYI…WCHG). PSI domains lie at 1819-1859 (PCRL…PPCS), 1867-1922 (ECRR…NDCR), 2003-2061 (PCHL…ESCS), and 2063-2120 (GCAQ…LSCP). The N-linked (GlcNAc...) asparagine glycan is linked to Asn-2009. The EGF-like 5 domain occupies 2121 to 2159 (PEDECANGHHDCNETQNCHDQPHGYECSCKTGYTMDNVT). Disulfide bonds link Cys-2125–Cys-2138 and Cys-2132–Cys-2147. N-linked (GlcNAc...) asparagine glycosylation is found at Asn-2157 and Asn-2172. 4 cysteine pairs are disulfide-bonded: Cys-2196–Cys-2204, Cys-2198–Cys-2213, Cys-2216–Cys-2225, and Cys-2228–Cys-2242. Laminin EGF-like domains follow at residues 2196 to 2244 (CRCN…TCRP) and 2323 to 2386 (CQCN…QCYR). Residues 2465–2507 (HTVHIQPPPPPPPPPPPADGVPRVASDLGGLGTGSGSGSPVEP) are disordered. Residues 2470–2483 (QPPPPPPPPPPPAD) are compositionally biased toward pro residues. Residues 2591-2611 (LFVFFSVFFSCFFLFLSLCVL) form a helical membrane-spanning segment. The Cytoplasmic portion of the chain corresponds to 2612 to 2788 (LWKAKQALDQ…SQDNLTSMSL (177 aa)). Positions 2761 to 2775 (GGAGGSGHGGGGGRK) are enriched in gly residues. The interval 2761-2788 (GGAGGSGHGGGGGRKGLLSQDNLTSMSL) is disordered. A compositionally biased stretch (polar residues) spans 2779 to 2788 (SQDNLTSMSL).

Expressed in brain.

It is found in the membrane. Functionally, acts as a negative regulator of hedgehog signaling. The chain is Multiple epidermal growth factor-like domains protein 8 (Megf8) from Rattus norvegicus (Rat).